The sequence spans 316 residues: HPr kinase/phosphorylase (316 aa).

Catalysis depends on residues histidine 146 and lysine 167. 161 to 168 (GESGLGKS) contacts ATP. Position 168 (serine 168) interacts with Mg(2+). Aspartate 185 serves as the catalytic Proton acceptor; for phosphorylation activity. Proton donor; for dephosphorylation activity. An important for the catalytic mechanism of both phosphorylation and dephosphorylation region spans residues 209 to 218 (LEVRGIGLLD). Position 210 (glutamate 210) interacts with Mg(2+). The active site involves arginine 252. An important for the catalytic mechanism of dephosphorylation region spans residues 273 to 278 (QVEAGR).

The protein belongs to the HPrK/P family. Homohexamer. The cofactor is Mg(2+).

The catalysed reaction is [HPr protein]-L-serine + ATP = [HPr protein]-O-phospho-L-serine + ADP + H(+). It catalyses the reaction [HPr protein]-O-phospho-L-serine + phosphate + H(+) = [HPr protein]-L-serine + diphosphate. In terms of biological role, catalyzes the ATP- as well as the pyrophosphate-dependent phosphorylation of a specific serine residue in HPr, a phosphocarrier protein of the phosphoenolpyruvate-dependent sugar phosphotransferase system (PTS). HprK/P also catalyzes the pyrophosphate-producing, inorganic phosphate-dependent dephosphorylation (phosphorolysis) of seryl-phosphorylated HPr (P-Ser-HPr). This is HPr kinase/phosphorylase from Polaromonas sp. (strain JS666 / ATCC BAA-500).